The chain runs to 727 residues: LIM domain-binding protein 3 (727 aa).

A PDZ domain is found at 1–84 (MSYSVTLTGP…NLSLTLQKSK (84 aa)). Residues Ser-44, Ser-121, and Ser-123 each carry the phosphoserine modification. The segment at 86 to 197 (PIPISTTAPP…GSSQPRQYNN (112 aa)) is disordered. Positions 140-156 (PTFSPAFSRPSAFSSLA) are enriched in low complexity. Polar residues predominate over residues 188–197 (GSSQPRQYNN). Ser-217 carries the post-translational modification Phosphoserine. Arg-219 is modified (omega-N-methylarginine). Ser-223 carries the phosphoserine modification. Disordered regions lie at residues 284-440 (TEFM…YTPS) and 472-529 (APSV…PQVP). Residues 312–385 (ATTPLLPASA…SAPATHTSYS (74 aa)) show a composition bias toward low complexity. A compositionally biased stretch (pro residues) spans 428–440 (PYTPSPAPAYTPS). The segment covering 494-513 (DSFSQKFAPGKSTTSISKQT) has biased composition (polar residues). Omega-N-methylarginine occurs at positions 516 and 533. LIM zinc-binding domains are found at residues 549–607 (PLCG…QFFA), 608–667 (PLCA…LFST), and 668–727 (KCHG…TINL).

As to quaternary structure, interacts via its LIM domains with various PKC isoforms. Interacts via its PDZ domain with the ACTN2 C-terminal region. Interacts with MYOZ1, MYOZ2 and MYOZ3. As to expression, expressed primarily in skeletal muscle and to a lesser extent in heart. Also detected in brain and placenta.

The protein localises to the cytoplasm. It localises to the perinuclear region. It is found in the cell projection. Its subcellular location is the pseudopodium. The protein resides in the cytoskeleton. The protein localises to the myofibril. It localises to the sarcomere. It is found in the z line. Functionally, may function as an adapter in striated muscle to couple protein kinase C-mediated signaling via its LIM domains to the cytoskeleton. The protein is LIM domain-binding protein 3 of Homo sapiens (Human).